Here is a 97-residue protein sequence, read N- to C-terminus: Putative septation protein SpoVG (97 aa).

This sequence belongs to the SpoVG family.

In terms of biological role, essential for sporulation. Interferes with or is a negative regulator of the pathway leading to asymmetric septation. The chain is Putative septation protein SpoVG from Bacillus velezensis (strain DSM 23117 / BGSC 10A6 / LMG 26770 / FZB42) (Bacillus amyloliquefaciens subsp. plantarum).